We begin with the raw amino-acid sequence, 428 residues long: Adenylosuccinate synthetase, chloroplastic (428 aa).

GTP-binding positions include 17–23 and 45–47; these read GDEGKGK and GHT. Catalysis depends on Asp-18, which acts as the Proton acceptor. Asp-18 and Gly-45 together coordinate Mg(2+). Residues 18 to 21, 43 to 46, Thr-135, Arg-149, Asn-226, Thr-241, and Arg-305 each bind IMP; these read DEGK and NAGH. His-46 (proton donor) is an active-site residue. 301–307 is a binding site for substrate; that stretch reads TTTGRPR. GTP-binding positions include Arg-307, 333 to 335, and 416 to 418; these read KLD and GVG.

This sequence belongs to the adenylosuccinate synthetase family. As to quaternary structure, homodimer. It depends on Mg(2+) as a cofactor.

It localises to the plastid. The protein localises to the chloroplast. It carries out the reaction IMP + L-aspartate + GTP = N(6)-(1,2-dicarboxyethyl)-AMP + GDP + phosphate + 2 H(+). The protein operates within purine metabolism; AMP biosynthesis via de novo pathway; AMP from IMP: step 1/2. Plays an important role in the de novo pathway and in the salvage pathway of purine nucleotide biosynthesis. Catalyzes the first committed step in the biosynthesis of AMP from IMP. This Ostreococcus lucimarinus (strain CCE9901) protein is Adenylosuccinate synthetase, chloroplastic.